The primary structure comprises 355 residues: Countin-like protein (355 aa).

An N-terminal signal peptide occupies residues 1–27 (MNKSLFSLILLIITIFNLASNINIVSA). The disordered stretch occupies residues 63–83 (NNHEDNNNNNNNNNNNNNAYN). Positions 69–83 (NNNNNNNNNNNNAYN) are enriched in low complexity. The region spanning 93–177 (GDIECVVCLD…ELITACSTPK (85 aa)) is the Saposin B-type domain. 3 disulfides stabilise this stretch: cysteine 97-cysteine 173, cysteine 100-cysteine 167, and cysteine 128-cysteine 140. Asparagine 132, asparagine 209, asparagine 242, asparagine 253, asparagine 254, asparagine 282, and asparagine 303 each carry an N-linked (GlcNAc...) asparagine glycan. The tract at residues 290 to 355 (ISNPTPTPTP…SSHYKNKINK (66 aa)) is disordered. The segment covering 301–342 (PSNSTTPTPTPTNSTPTPTSTSTPTSTPTSTPTPTPTSSSST) has biased composition (low complexity). Basic residues predominate over residues 345-355 (HSSHYKNKINK).

The protein belongs to the countin family.

The protein localises to the secreted. The sequence is that of Countin-like protein from Dictyostelium discoideum (Social amoeba).